The following is a 65-amino-acid chain: MKMKIFIITIVIALFITSIVEAQNKLDVKCVRLETCREPCKKQLCLLPMKCMNGKCVCSPSRKIC.

An N-terminal signal peptide occupies residues 1–22 (MKMKIFIITIVIALFITSIVEA). Disulfide bonds link Cys-30-Cys-51, Cys-36-Cys-56, and Cys-40-Cys-58.

The protein belongs to the short scorpion toxin superfamily. Potassium channel inhibitor family. Alpha-KTx 12 subfamily. As to expression, expressed by the venom gland.

Its subcellular location is the secreted. In terms of biological role, inhibits voltage-gated potassium channels. The sequence is that of Potassium channel toxin alpha-KTx 12.6 from Lychas mucronatus (Chinese swimming scorpion).